The sequence spans 345 residues: Ferrochelatase (345 aa).

Fe cation contacts are provided by H215 and E296.

Belongs to the ferrochelatase family.

It localises to the cytoplasm. The enzyme catalyses heme b + 2 H(+) = protoporphyrin IX + Fe(2+). The protein operates within porphyrin-containing compound metabolism; protoheme biosynthesis; protoheme from protoporphyrin-IX: step 1/1. Catalyzes the ferrous insertion into protoporphyrin IX. This chain is Ferrochelatase, found in Rhodopseudomonas palustris (strain TIE-1).